A 416-amino-acid polypeptide reads, in one-letter code: Glutamyl-tRNA reductase (416 aa).

Substrate contacts are provided by residues 49 to 52 (TCNR), S105, 110 to 112 (EPQ), and Q116. The active-site Nucleophile is the C50. 185 to 190 (GAGETI) serves as a coordination point for NADP(+).

It belongs to the glutamyl-tRNA reductase family. Homodimer.

It catalyses the reaction (S)-4-amino-5-oxopentanoate + tRNA(Glu) + NADP(+) = L-glutamyl-tRNA(Glu) + NADPH + H(+). The protein operates within porphyrin-containing compound metabolism; protoporphyrin-IX biosynthesis; 5-aminolevulinate from L-glutamyl-tRNA(Glu): step 1/2. Its function is as follows. Catalyzes the NADPH-dependent reduction of glutamyl-tRNA(Glu) to glutamate 1-semialdehyde (GSA). This chain is Glutamyl-tRNA reductase, found in Shewanella sp. (strain MR-7).